Reading from the N-terminus, the 594-residue chain is Arginine--tRNA ligase (594 aa).

The short motif at 139–149 (ANPTGPLHVGH) is the 'HIGH' region element.

Belongs to the class-I aminoacyl-tRNA synthetase family. In terms of assembly, monomer.

It is found in the cytoplasm. The catalysed reaction is tRNA(Arg) + L-arginine + ATP = L-arginyl-tRNA(Arg) + AMP + diphosphate. The sequence is that of Arginine--tRNA ligase from Burkholderia mallei (strain NCTC 10247).